The sequence spans 295 residues: Light-independent protochlorophyllide reductase iron-sulfur ATP-binding protein (295 aa).

ATP contacts are provided by residues 10-15 (GIGKST) and Lys-39. Position 14 (Ser-14) interacts with Mg(2+). [4Fe-4S] cluster is bound by residues Cys-95 and Cys-129. 180–181 (NR) serves as a coordination point for ATP. Residues 275 to 289 (TKDKKENKKEDKENS) are compositionally biased toward basic and acidic residues. Residues 275–295 (TKDKKENKKEDKENSADFTWL) are disordered.

This sequence belongs to the NifH/BchL/ChlL family. Homodimer. Protochlorophyllide reductase is composed of three subunits; ChlL, ChlN and ChlB. Requires [4Fe-4S] cluster as cofactor.

It localises to the plastid. Its subcellular location is the chloroplast. It carries out the reaction chlorophyllide a + oxidized 2[4Fe-4S]-[ferredoxin] + 2 ADP + 2 phosphate = protochlorophyllide a + reduced 2[4Fe-4S]-[ferredoxin] + 2 ATP + 2 H2O. The protein operates within porphyrin-containing compound metabolism; chlorophyll biosynthesis (light-independent). Component of the dark-operative protochlorophyllide reductase (DPOR) that uses Mg-ATP and reduced ferredoxin to reduce ring D of protochlorophyllide (Pchlide) to form chlorophyllide a (Chlide). This reaction is light-independent. The L component serves as a unique electron donor to the NB-component of the complex, and binds Mg-ATP. In Physcomitrium patens (Spreading-leaved earth moss), this protein is Light-independent protochlorophyllide reductase iron-sulfur ATP-binding protein.